Reading from the N-terminus, the 895-residue chain is Protein translocase subunit SecA (895 aa).

Residues Gln-89, 107-111, and Asp-502 contribute to the ATP site; that span reads GEGKT. Disordered stretches follow at residues 560-579 and 848-884; these read RRIDNQLRGRSGRQGDPGRT and AAPAAEPVEAPKEGFVEDDPSTWGNPSRNDKCPCGSG. Residues Cys-879, Cys-881, Cys-890, and His-891 each contribute to the Zn(2+) site.

It belongs to the SecA family. As to quaternary structure, monomer and homodimer. Part of the essential Sec protein translocation apparatus which comprises SecA, SecYEG and auxiliary proteins SecDF-YajC and YidC. The cofactor is Zn(2+).

The protein localises to the cell inner membrane. The protein resides in the cytoplasm. It carries out the reaction ATP + H2O + cellular proteinSide 1 = ADP + phosphate + cellular proteinSide 2.. Its function is as follows. Part of the Sec protein translocase complex. Interacts with the SecYEG preprotein conducting channel. Has a central role in coupling the hydrolysis of ATP to the transfer of proteins into and across the cell membrane, serving both as a receptor for the preprotein-SecB complex and as an ATP-driven molecular motor driving the stepwise translocation of polypeptide chains across the membrane. The polypeptide is Protein translocase subunit SecA (Ruegeria sp. (strain TM1040) (Silicibacter sp.)).